A 381-amino-acid polypeptide reads, in one-letter code: 2-epi-5-epi-valiolone synthase (381 aa).

NAD(+) is bound by residues aspartate 50, 81 to 84 (EEAK), 114 to 118 (GIVLD), 138 to 139 (TS), lysine 151, lysine 160, and 178 to 181 (FLDT). Lysine 151 is a catalytic residue. Glutamate 193, histidine 264, and histidine 280 together coordinate a divalent metal cation.

This sequence belongs to the sugar phosphate cyclases superfamily. EEVS family. NAD(+) is required as a cofactor. The cofactor is Co(2+).

The enzyme catalyses D-sedoheptulose 7-phosphate = 2-epi-5-epi-valiolone + phosphate. It functions in the pathway antibiotic biosynthesis. Catalyzes the cyclization of D-sedoheptulose 7-phosphate to 2-epi-5-epi-valiolone. Involved in cetoniacytone A biosynthesis. This chain is 2-epi-5-epi-valiolone synthase, found in Actinomyces sp.